We begin with the raw amino-acid sequence, 172 residues long: Large ribosomal subunit protein uL10 (172 aa).

Belongs to the universal ribosomal protein uL10 family. In terms of assembly, part of the ribosomal stalk of the 50S ribosomal subunit. The N-terminus interacts with L11 and the large rRNA to form the base of the stalk. The C-terminus forms an elongated spine to which L12 dimers bind in a sequential fashion forming a multimeric L10(L12)X complex.

Its function is as follows. Forms part of the ribosomal stalk, playing a central role in the interaction of the ribosome with GTP-bound translation factors. In Mesorhizobium japonicum (strain LMG 29417 / CECT 9101 / MAFF 303099) (Mesorhizobium loti (strain MAFF 303099)), this protein is Large ribosomal subunit protein uL10.